A 359-amino-acid chain; its full sequence is DNA polymerase IV (359 aa).

Residues Ile-6 to Gly-186 enclose the UmuC domain. Positions 10 and 104 each coordinate Mg(2+). Glu-105 is an active-site residue.

This sequence belongs to the DNA polymerase type-Y family. As to quaternary structure, monomer. It depends on Mg(2+) as a cofactor.

The protein resides in the cytoplasm. The enzyme catalyses DNA(n) + a 2'-deoxyribonucleoside 5'-triphosphate = DNA(n+1) + diphosphate. Poorly processive, error-prone DNA polymerase involved in untargeted mutagenesis. Copies undamaged DNA at stalled replication forks, which arise in vivo from mismatched or misaligned primer ends. These misaligned primers can be extended by PolIV. Exhibits no 3'-5' exonuclease (proofreading) activity. May be involved in translesional synthesis, in conjunction with the beta clamp from PolIII. In Akkermansia muciniphila (strain ATCC BAA-835 / DSM 22959 / JCM 33894 / BCRC 81048 / CCUG 64013 / CIP 107961 / Muc), this protein is DNA polymerase IV.